The sequence spans 1069 residues: Leucine--tRNA ligase (1069 aa).

The interval 19–53 (TAEHGTGAANATASPSGAVPPSGATATAGTGDEPG) is disordered. The 'HIGH' region signature appears at 107 to 118 (PYPSGTGLHVGH). The segment covering 823–836 (GRFTHHGAPVDRRS) has biased composition (basic and acidic residues). Residues 823 to 846 (GRFTHHGAPVDRRSGKMGKSLKNS) are disordered. The 'KMSKS' region motif lies at 838–842 (KMGKS). Position 841 (K841) interacts with ATP.

This sequence belongs to the class-I aminoacyl-tRNA synthetase family.

The protein resides in the cytoplasm. It carries out the reaction tRNA(Leu) + L-leucine + ATP = L-leucyl-tRNA(Leu) + AMP + diphosphate. In Frankia alni (strain DSM 45986 / CECT 9034 / ACN14a), this protein is Leucine--tRNA ligase.